We begin with the raw amino-acid sequence, 511 residues long: Apolipoprotein N-acyltransferase (511 aa).

6 helical membrane-spanning segments follow: residues 24–44 (LALA…LLYL), 58–78 (GWWY…VSIH), 90–110 (FLML…AWLW), 125–145 (LAFA…LTGF), 163–183 (VPVG…ALLV), and 192–212 (GASL…GLYL). The 241-residue stretch at 230–470 (IQGNIAQELK…QGILRGEVIP (241 aa)) folds into the CN hydrolase domain. Glu269 functions as the Proton acceptor in the catalytic mechanism. Lys330 is a catalytic residue. Residue Cys382 is the Nucleophile of the active site. A helical membrane pass occupies residues 482-502 (VWPLAGLAGVLLLWALLGRQL).

Belongs to the CN hydrolase family. Apolipoprotein N-acyltransferase subfamily.

It localises to the cell inner membrane. It catalyses the reaction N-terminal S-1,2-diacyl-sn-glyceryl-L-cysteinyl-[lipoprotein] + a glycerophospholipid = N-acyl-S-1,2-diacyl-sn-glyceryl-L-cysteinyl-[lipoprotein] + a 2-acyl-sn-glycero-3-phospholipid + H(+). It functions in the pathway protein modification; lipoprotein biosynthesis (N-acyl transfer). Its function is as follows. Catalyzes the phospholipid dependent N-acylation of the N-terminal cysteine of apolipoprotein, the last step in lipoprotein maturation. In Pseudomonas aeruginosa (strain UCBPP-PA14), this protein is Apolipoprotein N-acyltransferase.